The sequence spans 155 residues: Ribosomal RNA large subunit methyltransferase H (155 aa).

S-adenosyl-L-methionine-binding positions include glycine 104 and 123 to 128; that span reads LGPMTF.

This sequence belongs to the RNA methyltransferase RlmH family. As to quaternary structure, homodimer.

The protein resides in the cytoplasm. The catalysed reaction is pseudouridine(1915) in 23S rRNA + S-adenosyl-L-methionine = N(3)-methylpseudouridine(1915) in 23S rRNA + S-adenosyl-L-homocysteine + H(+). In terms of biological role, specifically methylates the pseudouridine at position 1915 (m3Psi1915) in 23S rRNA. This is Ribosomal RNA large subunit methyltransferase H from Nitratidesulfovibrio vulgaris (strain DSM 19637 / Miyazaki F) (Desulfovibrio vulgaris).